The chain runs to 358 residues: tRNA-specific 2-thiouridylase MnmA 2 (358 aa).

ATP contacts are provided by residues 11-18 (GMSGGVDS) and Met-37. Cys-106 serves as the catalytic Nucleophile. Cys-106 and Cys-202 are joined by a disulfide. Gly-130 is a binding site for ATP. Positions 152–154 (KDQ) are interaction with tRNA. The active-site Cysteine persulfide intermediate is the Cys-202. The tract at residues 308–309 (RY) is interaction with tRNA.

This sequence belongs to the MnmA/TRMU family.

Its subcellular location is the cytoplasm. It carries out the reaction S-sulfanyl-L-cysteinyl-[protein] + uridine(34) in tRNA + AH2 + ATP = 2-thiouridine(34) in tRNA + L-cysteinyl-[protein] + A + AMP + diphosphate + H(+). Catalyzes the 2-thiolation of uridine at the wobble position (U34) of tRNA, leading to the formation of s(2)U34. The chain is tRNA-specific 2-thiouridylase MnmA 2 from Clostridium tetani (strain Massachusetts / E88).